Reading from the N-terminus, the 296-residue chain is Transposase for insertion sequence element IS629 (296 aa).

An Integrase catalytic domain is found at 125–285; sequence VAERPDQLWV…TPPAEAEKAY (161 aa).

Involved in the transposition of the insertion sequence. This chain is Transposase for insertion sequence element IS629, found in Shigella sonnei.